The sequence spans 239 residues: Ribosomal RNA small subunit methyltransferase G (239 aa).

S-adenosyl-L-methionine contacts are provided by residues Gly77, Phe82, 128–129 (AE), and Arg146. The segment at 214–239 (IDKKRQTPKKYPRKPGTPNKTPLLEK) is disordered.

It belongs to the methyltransferase superfamily. RNA methyltransferase RsmG family.

Its subcellular location is the cytoplasm. Specifically methylates the N7 position of guanine in position 535 of 16S rRNA. In Staphylococcus aureus (strain Mu3 / ATCC 700698), this protein is Ribosomal RNA small subunit methyltransferase G.